The chain runs to 361 residues: Dihydroorotate dehydrogenase (quinone) (361 aa).

FMN is bound by residues 67–71 and Thr91; that span reads AGLDK. Lys71 serves as a coordination point for substrate. Residue 116–120 participates in substrate binding; that stretch reads NRMGF. The FMN site is built by Asn145 and Asn178. Position 178 (Asn178) interacts with substrate. Ser181 (nucleophile) is an active-site residue. Position 183 (Asn183) interacts with substrate. The FMN site is built by Lys223 and Gly251. 252–253 lines the substrate pocket; that stretch reads NT. FMN-binding positions include Gly273, Gly302, and 323–324; that span reads YT.

The protein belongs to the dihydroorotate dehydrogenase family. Type 2 subfamily. Monomer. It depends on FMN as a cofactor.

It localises to the cell membrane. The enzyme catalyses (S)-dihydroorotate + a quinone = orotate + a quinol. Its pathway is pyrimidine metabolism; UMP biosynthesis via de novo pathway; orotate from (S)-dihydroorotate (quinone route): step 1/1. Functionally, catalyzes the conversion of dihydroorotate to orotate with quinone as electron acceptor. In Deinococcus geothermalis (strain DSM 11300 / CIP 105573 / AG-3a), this protein is Dihydroorotate dehydrogenase (quinone).